Here is a 117-residue protein sequence, read N- to C-terminus: Immunoglobulin heavy variable 1-69-2 (117 aa).

The signal sequence occupies residues 1–19 (MDCTWRILLLVAAATGTHA). The interval 20-44 (EVQLVQSGAEVKKPGATVKISCKVS) is framework-1. Positions 20 to 117 (EVQLVQSGAE…EDTAVYYCAT (98 aa)) constitute an Ig-like domain. A disulfide bridge links cysteine 41 with cysteine 115. The segment at 45–52 (GYTFTDYY) is complementarity-determining-1. Residues 53–69 (MHWVQQAPGKGLEWMGL) form a framework-2 region. Residues 70–77 (VDPEDGET) are complementarity-determining-2. A framework-3 region spans residues 78–115 (IYAEKFQGRVTITADTSTDTAYMELSSLRSEDTAVYYC). Positions 116–117 (AT) are complementarity-determining-3.

As to quaternary structure, immunoglobulins are composed of two identical heavy chains and two identical light chains; disulfide-linked.

It localises to the secreted. Its subcellular location is the cell membrane. Its function is as follows. V region of the variable domain of immunoglobulin heavy chains that participates in the antigen recognition. Immunoglobulins, also known as antibodies, are membrane-bound or secreted glycoproteins produced by B lymphocytes. In the recognition phase of humoral immunity, the membrane-bound immunoglobulins serve as receptors which, upon binding of a specific antigen, trigger the clonal expansion and differentiation of B lymphocytes into immunoglobulins-secreting plasma cells. Secreted immunoglobulins mediate the effector phase of humoral immunity, which results in the elimination of bound antigens. The antigen binding site is formed by the variable domain of one heavy chain, together with that of its associated light chain. Thus, each immunoglobulin has two antigen binding sites with remarkable affinity for a particular antigen. The variable domains are assembled by a process called V-(D)-J rearrangement and can then be subjected to somatic hypermutations which, after exposure to antigen and selection, allow affinity maturation for a particular antigen. The sequence is that of Immunoglobulin heavy variable 1-69-2 from Homo sapiens (Human).